The sequence spans 820 residues: Probable ATP-dependent RNA helicase DDX23 (820 aa).

Over residues Met1–Lys42 the composition is skewed to basic and acidic residues. The tract at residues Met1–Ser244 is disordered. Residues Ser14 and Ser16 each carry the phosphoserine modification. The span at Asp43 to Ser65 shows a compositional bias: basic residues. Residues Lys66–Arg105 are compositionally biased toward basic and acidic residues. Phosphoserine occurs at positions 107 and 109. Basic and acidic residues-rich tracts occupy residues Arg112–Pro137, Leu147–Asn226, and Gly233–Ser244. The Q motif signature appears at Arg391–Arg419. The Helicase ATP-binding domain maps to Ile422–Val627. Residue Ala435–Thr442 coordinates ATP. Positions Asp549–Asp552 match the DEAD box motif. A Helicase C-terminal domain is found at Lys651–Pro799. Glycyl lysine isopeptide (Lys-Gly) (interchain with G-Cter in SUMO2) cross-links involve residues Lys686 and Lys811.

The protein belongs to the DEAD box helicase family. DDX23/PRP28 subfamily. As to quaternary structure, the phosphorylated form (by SRPK2) is a component of the U4/U6-U5 tri-snRNP complex composed of the U4, U6 and U5 snRNAs and at least PRPF3, PRPF4, PRPF6, PRPF8, PRPF31, SNRNP200, TXNL4A, WDR57, SNRNP40, DDX23, CD2BP2, PPIH, SNU13, EFTUD2, SART1 and USP39. Identified in the spliceosome C complex. Interacts with ERBB4. Interacts with ERCC6. In vitro phosphorylated by CLK1 and U1 snRNP-associated protein kinase. Phosphorylated by SRPK2 and this phosphorylation is required for its association with the tri-snRNP (U4/U6-U5 tri-small nuclear ribonucleoproteins) and subsequent spliceosomal B complex formation. May be phosphorylated by SRPK2 on Ser residues in the SR domain; the phosphorylation is required for the removal of inappropriate R-loops during transcription.

It is found in the nucleus. The protein localises to the chromosome. The catalysed reaction is ATP + H2O = ADP + phosphate + H(+). Functionally, involved in pre-mRNA splicing and its phosphorylated form (by SRPK2) is required for spliceosomal B complex formation. Independently of its spliceosome formation function, required for the suppression of incorrect R-loops formed during transcription; R-loops are composed of a DNA:RNA hybrid and the associated non-template single-stranded DNA. This chain is Probable ATP-dependent RNA helicase DDX23, found in Pongo abelii (Sumatran orangutan).